We begin with the raw amino-acid sequence, 146 residues long: Hemoglobin subunit beta (146 aa).

The Globin domain maps to 2 to 146 (HWSAEEKQLI…VAHALARKYH (145 aa)). Heme b-binding residues include His-63 and His-92.

It belongs to the globin family. Heterotetramer of two alpha chains and two beta chains. In terms of tissue distribution, red blood cells.

Its function is as follows. Involved in oxygen transport from the lung to the various peripheral tissues. The protein is Hemoglobin subunit beta (HBB) of Anser indicus (Bar-headed goose).